We begin with the raw amino-acid sequence, 290 residues long: MKSGFAAILGRPSTGKSTLLNSICGHKISIISPIPQTTRNKIKGIFTDDRGQIIFIDTPGFHLSKKKFNIAMMNNIHSSIGEVELILYIIDIQDTPGEEENKMLEIIKNSKIKFLVLLNKVDLKNTKIKEITQFLKEKGIEDSNIIKISAEKKINTEELKNKIYENFSEGPLYYPQEYYTDQKINFRISEIIREKAIENLKEELPYSLYVDIDTLENKKRGLFIRANIFVANESQKGIIVGKNGKEIKSIGERARKTIAKIFETKCNLFLQVKLKKNWNKEDKLIKRLIN.

Positions Lys-2 to Glu-169 constitute an Era-type G domain. The tract at residues Gly-10–Ser-17 is G1. A GTP-binding site is contributed by Gly-10–Ser-17. The G2 stretch occupies residues Gln-36–Asn-40. The G3 stretch occupies residues Asp-57 to Gly-60. Residues Asp-57–Phe-61 and Asn-119–Asp-122 contribute to the GTP site. The segment at Asn-119–Asp-122 is G4. A G5 region spans residues Ile-148 to Ala-150. The 77-residue stretch at Leu-200 to Lys-276 folds into the KH type-2 domain.

Belongs to the TRAFAC class TrmE-Era-EngA-EngB-Septin-like GTPase superfamily. Era GTPase family. In terms of assembly, monomer.

Its subcellular location is the cytoplasm. The protein localises to the cell inner membrane. Its function is as follows. An essential GTPase that binds both GDP and GTP, with rapid nucleotide exchange. Plays a role in 16S rRNA processing and 30S ribosomal subunit biogenesis and possibly also in cell cycle regulation and energy metabolism. The protein is GTPase Era of Borreliella afzelii (strain PKo) (Borrelia afzelii).